We begin with the raw amino-acid sequence, 368 residues long: (Iso)eugenol O-methyltransferase (368 aa).

Residues 1-2 (MG) constitute a propeptide that is removed on maturation. S-adenosyl-L-methionine-binding positions include S187, 211–212 (GG), D234, 254–255 (DM), and K268. Residue H272 is the Proton acceptor of the active site.

Belongs to the class I-like SAM-binding methyltransferase superfamily. Cation-independent O-methyltransferase family. COMT subfamily. As to quaternary structure, homodimer. Expressed in petals, style and stamens, but not in stigma, sepals, leaves or stem tissues.

The enzyme catalyses (E)-isoeugenol + S-adenosyl-L-methionine = (E)-isomethyleugenol + S-adenosyl-L-homocysteine + H(+). Functionally, catalyzes the methylation of the para-4-hydroxyl of both eugenol and (iso)eugenol to methyleugenol and isomethyleugenol, respectively. The resulting products are part of a complex mixture of low-molecular-weight volatile compounds emitted by the flowers to attract pollinators. This is (Iso)eugenol O-methyltransferase (IEMT1) from Clarkia breweri (Fairy fans).